Reading from the N-terminus, the 605-residue chain is Replication protein E1 (605 aa).

Positions 80 to 82 (KRK) match the Nuclear localization signal motif. Phosphoserine; by host is present on residues S85 and S93. The short motif at 92–101 (LSPQLESISL) is the Nuclear export signal element. The tract at residues 145–308 (QGTKGLGIVK…TLINHQSANA (164 aa)) is DNA-binding region. In terms of domain architecture, SF3 helicase spans 407 to 557 (INFIEFLTVF…FPLDANHKPQ (151 aa)). ATP is bound at residue 433–440 (GPPDTGKS). Residue K514 forms a Glycyl lysine isopeptide (Lys-Gly) (interchain with G-Cter in SUMO) linkage.

The protein belongs to the papillomaviridae E1 protein family. As to quaternary structure, can form hexamers. Interacts with E2 protein; this interaction increases E1 DNA binding specificity. Interacts with host DNA polymerase subunit POLA2. Interacts with host single stranded DNA-binding protein RPA1. Interacts with host TOP1; this interaction stimulates the enzymatic activity of TOP1. Post-translationally, phosphorylated. Sumoylated.

The protein localises to the host nucleus. The catalysed reaction is Couples ATP hydrolysis with the unwinding of duplex DNA by translocating in the 3'-5' direction.. It carries out the reaction ATP + H2O = ADP + phosphate + H(+). ATP-dependent DNA 3'-5' helicase required for initiation of viral DNA replication. It forms a complex with the viral E2 protein. The E1-E2 complex binds to the replication origin which contains binding sites for both proteins. During the initial step, a dimer of E1 interacts with a dimer of protein E2 leading to a complex that binds the viral origin of replication with high specificity. Then, a second dimer of E1 displaces the E2 dimer in an ATP-dependent manner to form the E1 tetramer. Following this, two E1 monomers are added to each half of the site, which results in the formation of two E1 trimers on the viral ori. Subsequently, two hexamers will be created. The double hexamer acts as a bi-directional helicase machinery and unwinds the viral DNA and then recruits the host DNA polymerase to start replication. In Homo sapiens (Human), this protein is Replication protein E1.